Reading from the N-terminus, the 271-residue chain is Intercellular adhesion molecule 4 (271 aa).

Positions 1–22 are cleaved as a signal peptide; it reads MGSLFPLSLLFFLAAAYPGVGS. Residues 23–240 are Extracellular-facing; that stretch reads ALGRRTKRAQ…MLAWSPAPTA (218 aa). Ig-like C2-type domains are found at residues 62–124 and 146–217; these read GKSV…TRWA and GRKY…LNLD. Asn68, Asn78, Asn190, and Asn223 each carry an N-linked (GlcNAc...) asparagine glycan. 4 disulfide bridges follow: Cys69–Cys113, Cys69–Cys117, Cys73–Cys117, and Cys153–Cys210. A helical transmembrane segment spans residues 241–261; the sequence is LASGSIAALVGILLTVGAAYL. Topologically, residues 262–271 are cytoplasmic; that stretch reads CKCLAMKSQA.

It belongs to the immunoglobulin superfamily. ICAM family. In terms of processing, N- and O-glycosylated. As to expression, erythrocytes.

It is found in the cell membrane. Its subcellular location is the secreted. In terms of biological role, ICAM proteins are ligands for the leukocyte adhesion protein LFA-1 (integrin alpha-L/beta-2). ICAM4 is also a ligand for alpha-4/beta-1 and alpha-V integrins. The chain is Intercellular adhesion molecule 4 (ICAM4) from Homo sapiens (Human).